The sequence spans 368 residues: 3-dehydroquinate synthase (368 aa).

NAD(+) contacts are provided by residues 71–76 (DGEAAK), 105–109 (GATTD), 129–130 (TT), K142, and K151. Zn(2+) contacts are provided by E184, H247, and H263.

This sequence belongs to the sugar phosphate cyclases superfamily. Dehydroquinate synthase family. The cofactor is Co(2+). Zn(2+) is required as a cofactor. NAD(+) serves as cofactor.

The protein resides in the cytoplasm. The enzyme catalyses 7-phospho-2-dehydro-3-deoxy-D-arabino-heptonate = 3-dehydroquinate + phosphate. It participates in metabolic intermediate biosynthesis; chorismate biosynthesis; chorismate from D-erythrose 4-phosphate and phosphoenolpyruvate: step 2/7. Its function is as follows. Catalyzes the conversion of 3-deoxy-D-arabino-heptulosonate 7-phosphate (DAHP) to dehydroquinate (DHQ). The polypeptide is 3-dehydroquinate synthase (Thermobifida fusca (strain YX)).